Consider the following 52-residue polypeptide: Large ribosomal subunit protein bL33 (52 aa).

The protein belongs to the bacterial ribosomal protein bL33 family.

In Helicobacter pylori (strain HPAG1), this protein is Large ribosomal subunit protein bL33.